The following is a 638-amino-acid chain: Threonine--tRNA ligase (638 aa).

The TGS domain maps to 1–61; sequence MPKITLPDGT…KNDSKVVIIT (61 aa). The tract at residues 242-533 is catalytic; the sequence is DHRKLGKKHS…LIEQYEAKFP (292 aa). Zn(2+)-binding residues include C333, H384, and H510.

This sequence belongs to the class-II aminoacyl-tRNA synthetase family. As to quaternary structure, homodimer. Requires Zn(2+) as cofactor.

The protein resides in the cytoplasm. It carries out the reaction tRNA(Thr) + L-threonine + ATP = L-threonyl-tRNA(Thr) + AMP + diphosphate + H(+). Functionally, catalyzes the attachment of threonine to tRNA(Thr) in a two-step reaction: L-threonine is first activated by ATP to form Thr-AMP and then transferred to the acceptor end of tRNA(Thr). Also edits incorrectly charged L-seryl-tRNA(Thr). This chain is Threonine--tRNA ligase, found in Prochlorococcus marinus (strain MIT 9515).